Consider the following 62-residue polypeptide: LECHNQQSSQTPTTTGCSGGENNCYKKEWRDNRGYRTERGCGCPSVKKGIGINCCTTDRCNN.

Residues 1–16 show a composition bias toward polar residues; that stretch reads LECHNQQSSQTPTTTG. Residues 1–23 form a disordered region; sequence LECHNQQSSQTPTTTGCSGGENN. Intrachain disulfides connect Cys-3/Cys-24, Cys-17/Cys-41, Cys-43/Cys-54, and Cys-55/Cys-60.

Belongs to the three-finger toxin family. Short-chain subfamily. Type I alpha-neurotoxin sub-subfamily. Expressed by the venom gland.

It is found in the secreted. Functionally, binds to muscle nicotinic acetylcholine receptor (nAChR) and inhibit acetylcholine from binding to the receptor, thereby impairing neuromuscular transmission. This is Cobrotoxin II from Naja kaouthia (Monocled cobra).